Consider the following 223-residue polypeptide: DNA replication complex GINS protein SLD5 (223 aa).

Position 1 is an N-acetylmethionine (Met-1). Thr-2 is subject to N-acetylthreonine; in DNA replication complex GINS protein SLD5, N-terminally processed. Phosphoserine occurs at positions 12 and 16. Positions 166 to 223 (DLDSYVFLRVKERQENILVEPEADEQRDYVIDLEVGSQHLIRYKTIAPLVASGAVQLI) are important for GINS complex assembly.

It belongs to the GINS4/SLD5 family. As to quaternary structure, component of the CMG helicase complex, a hexameric ring of related MCM2-7 subunits stabilized by CDC45 and the tetrameric GINS complex. Associated with ORC2. Interacts with HELB. In terms of tissue distribution, highly abundant in testis. Weakly expressed in thymus and bone marrow.

It is found in the nucleus. The protein resides in the chromosome. The protein localises to the cytoplasm. Required for initiation of chromosomal DNA replication. Core component of CDC45-MCM-GINS (CMG) helicase, the molecular machine that unwinds template DNA during replication, and around which the replisome is built. The chain is DNA replication complex GINS protein SLD5 (Gins4) from Mus musculus (Mouse).